Here is a 189-residue protein sequence, read N- to C-terminus: UPF0312 protein VC_A0539 (189 aa).

The first 22 residues, 1-22 (MKKTLMAVGLAAVMSIPFAANA), serve as a signal peptide directing secretion.

Belongs to the UPF0312 family. Type 1 subfamily.

The protein resides in the periplasm. The protein is UPF0312 protein VC_A0539 of Vibrio cholerae serotype O1 (strain ATCC 39315 / El Tor Inaba N16961).